Here is a 461-residue protein sequence, read N- to C-terminus: Elongation factor 1-alpha (461 aa).

The tr-type G domain maps to 5 to 242 (KIHINIVVIG…DAILPPSRPT (238 aa)). The segment at 14-21 (GHVDSGKS) is G1. 14–21 (GHVDSGKS) contributes to the GTP binding site. The G2 stretch occupies residues 70–74 (GITID). The tract at residues 91-94 (DAPG) is G3. Residues 91 to 95 (DAPGH) and 153 to 156 (NKMD) each bind GTP. Residues 153-156 (NKMD) form a G4 region. The G5 stretch occupies residues 194–196 (SGW). Residues Glu-301 and Glu-374 each carry the 5-glutamyl glycerylphosphorylethanolamine modification.

The protein belongs to the TRAFAC class translation factor GTPase superfamily. Classic translation factor GTPase family. EF-Tu/EF-1A subfamily.

It is found in the cytoplasm. This protein promotes the GTP-dependent binding of aminoacyl-tRNA to the A-site of ribosomes during protein biosynthesis. This is Elongation factor 1-alpha from Apis mellifera (Honeybee).